Consider the following 157-residue polypeptide: Beta-defensin 125 (157 aa).

Residues 1–20 form the signal peptide; sequence MNILMLTFIICGLLTQVTKG. Disulfide bonds link cysteine 27-cysteine 55, cysteine 35-cysteine 49, and cysteine 39-cysteine 56. The segment at 109 to 157 is disordered; it reads GETMTPETNTPETTVPPSETTTPETTMPPSETATSETMPPPSQTALTHN. A compositionally biased stretch (low complexity) spans 110-145; it reads ETMTPETNTPETTVPPSETTTPETTMPPSETATSET.

It belongs to the beta-defensin family.

It is found in the secreted. In terms of biological role, has antibacterial activity. The polypeptide is Beta-defensin 125 (DEFB125) (Gorilla gorilla gorilla (Western lowland gorilla)).